We begin with the raw amino-acid sequence, 1448 residues long: DNA primase TraC (1448 aa).

3 stretches are compositionally biased toward basic and acidic residues: residues 844-856 (ARVQ…RDPN), 863-872 (SAAKEARKTA), and 882-898 (DAQR…RDRQ). Disordered stretches follow at residues 844-915 (ARVQ…INVP) and 952-982 (QGAA…QQAQ). The span at 964 to 982 (AQPAPEAQGEAQKPAQQAQ) shows a compositional bias: low complexity. Residues 1237–1325 (PALVISEGYA…GKAIFPIFAP (89 aa)) form the Toprim domain. The interval 1414–1448 (ISQVQRDEQQHQEQKHVEKKQQQIEQRPRRAARIG) is disordered. Over residues 1418–1441 (QRDEQQHQEQKHVEKKQQQIEQRP) the composition is skewed to basic and acidic residues.

Functionally, required for autonomous replication in E.coli. Transferred into the recipient cell during bacterial conjugation. Catalyzes the synthesis of short oligoribonucleotide primers with CpA or pCpA at their 5'-termini on a single-stranded template DNA. This chain is DNA primase TraC (traC), found in Escherichia coli.